A 250-amino-acid chain; its full sequence is MALAWCVVRRSASKFASVYGGRVRSISAVANRASLARNPSSIRPFVSRALNYSTAIDRISSEQTLIRVIDSEINSALQSDNIDSDEEMTPGSFPFRIEDKPGNQNVTLTRDYNGEHIKVVVSMPSLVSDENDDDDDDDEGPSNESSIPLVVTVTKKSGLTLEFSCMAFPDEIAIDALSVKHPGDSLEDQLANEGPDFEDLDENLKKTFYKFLEIRGVKASTTNFLHEYMTRKVNREYFLWLKNVKEFMEQ.

Residues 1–52 (MALAWCVVRRSASKFASVYGGRVRSISAVANRASLARNPSSIRPFVSRALNY) constitute a mitochondrion transit peptide. The segment at 124-147 (PSLVSDENDDDDDDDEGPSNESSI) is disordered. Acidic residues predominate over residues 129–141 (DENDDDDDDDEGP).

It belongs to the MAM33 family.

The protein localises to the mitochondrion matrix. This is an uncharacterized protein from Arabidopsis thaliana (Mouse-ear cress).